The sequence spans 188 residues: Holliday junction branch migration complex subunit RuvA (188 aa).

Residues methionine 1 to serine 64 are domain I. Positions asparagine 65–tyrosine 143 are domain II. Tyrosine 143 is a region of interest (flexible linker). The segment at tyrosine 143–serine 186 is domain III.

Belongs to the RuvA family. As to quaternary structure, homotetramer. Forms an RuvA(8)-RuvB(12)-Holliday junction (HJ) complex. HJ DNA is sandwiched between 2 RuvA tetramers; dsDNA enters through RuvA and exits via RuvB. An RuvB hexamer assembles on each DNA strand where it exits the tetramer. Each RuvB hexamer is contacted by two RuvA subunits (via domain III) on 2 adjacent RuvB subunits; this complex drives branch migration. In the full resolvosome a probable DNA-RuvA(4)-RuvB(12)-RuvC(2) complex forms which resolves the HJ.

It is found in the cytoplasm. Functionally, the RuvA-RuvB-RuvC complex processes Holliday junction (HJ) DNA during genetic recombination and DNA repair, while the RuvA-RuvB complex plays an important role in the rescue of blocked DNA replication forks via replication fork reversal (RFR). RuvA specifically binds to HJ cruciform DNA, conferring on it an open structure. The RuvB hexamer acts as an ATP-dependent pump, pulling dsDNA into and through the RuvAB complex. HJ branch migration allows RuvC to scan DNA until it finds its consensus sequence, where it cleaves and resolves the cruciform DNA. Promotes Holliday junction (HJ) branch migration in conjunction with RuvB. This Thermotoga maritima (strain ATCC 43589 / DSM 3109 / JCM 10099 / NBRC 100826 / MSB8) protein is Holliday junction branch migration complex subunit RuvA.